Reading from the N-terminus, the 283-residue chain is ATP synthase gamma chain (283 aa).

The protein belongs to the ATPase gamma chain family. In terms of assembly, F-type ATPases have 2 components, CF(1) - the catalytic core - and CF(0) - the membrane proton channel. CF(1) has five subunits: alpha(3), beta(3), gamma(1), delta(1), epsilon(1). CF(0) has three main subunits: a, b and c.

Its subcellular location is the cell membrane. Its function is as follows. Produces ATP from ADP in the presence of a proton gradient across the membrane. The gamma chain is believed to be important in regulating ATPase activity and the flow of protons through the CF(0) complex. The polypeptide is ATP synthase gamma chain (Exiguobacterium sibiricum (strain DSM 17290 / CCUG 55495 / CIP 109462 / JCM 13490 / 255-15)).